A 350-amino-acid chain; its full sequence is GTPase Obg (350 aa).

Residues 1 to 159 form the Obg domain; sequence MKLVDEAEIL…RLLKLELRLL (159 aa). The interval 127-146 is disordered; it reads NMHFKSSVNRAPRQSTTGEE. Positions 130–143 are enriched in polar residues; that stretch reads FKSSVNRAPRQSTT. One can recognise an OBG-type G domain in the interval 160 to 337; that stretch reads ADVGLLGFPN…IMKDVMAFFD (178 aa). Residues 166–173, 191–195, 213–216, 287–290, and 318–320 contribute to the GTP site; these read GFPNAGKS, FTTLY, DVPG, NKAD, and SAL. Positions 173 and 193 each coordinate Mg(2+).

The protein belongs to the TRAFAC class OBG-HflX-like GTPase superfamily. OBG GTPase family. Monomer. Requires Mg(2+) as cofactor.

It is found in the cytoplasm. Its function is as follows. An essential GTPase which binds GTP, GDP and possibly (p)ppGpp with moderate affinity, with high nucleotide exchange rates and a fairly low GTP hydrolysis rate. Plays a role in control of the cell cycle, stress response, ribosome biogenesis and in those bacteria that undergo differentiation, in morphogenesis control. The chain is GTPase Obg from Xanthomonas oryzae pv. oryzae (strain MAFF 311018).